Consider the following 243-residue polypeptide: UPF0246 protein M6_Spy1787 (243 aa).

It belongs to the UPF0246 family.

The sequence is that of UPF0246 protein M6_Spy1787 from Streptococcus pyogenes serotype M6 (strain ATCC BAA-946 / MGAS10394).